Reading from the N-terminus, the 1511-residue chain is DNA-directed RNA polymerase subunit beta' (1511 aa).

Positions 75, 77, 90, and 93 each coordinate Zn(2+). Residues aspartate 474, aspartate 476, and aspartate 478 each coordinate Mg(2+). Zn(2+) is bound by residues cysteine 804, cysteine 878, cysteine 885, and cysteine 888.

The protein belongs to the RNA polymerase beta' chain family. The RNAP catalytic core consists of 2 alpha, 1 beta, 1 beta' and 1 omega subunit. When a sigma factor is associated with the core the holoenzyme is formed, which can initiate transcription. It depends on Mg(2+) as a cofactor. Zn(2+) serves as cofactor.

It carries out the reaction RNA(n) + a ribonucleoside 5'-triphosphate = RNA(n+1) + diphosphate. DNA-dependent RNA polymerase catalyzes the transcription of DNA into RNA using the four ribonucleoside triphosphates as substrates. This is DNA-directed RNA polymerase subunit beta' from Aliarcobacter butzleri (strain RM4018) (Arcobacter butzleri).